Reading from the N-terminus, the 20-residue chain is FLSLIPHAINAVSTLVHHSG.

Glycine 20 carries the glycine amide modification.

In terms of tissue distribution, expressed by the skin glands.

It is found in the secreted. Its function is as follows. Has antiprotozoal activity against T.cruzi. The protein is Phylloseptin-O1 (psn4) of Pithecopus oreades (Orange-legged leaf frog).